Consider the following 50-residue polypeptide: Large ribosomal subunit protein eL39 (50 aa).

This sequence belongs to the eukaryotic ribosomal protein eL39 family. In terms of assembly, part of the 50S ribosomal subunit. Interacts weakly with protein L23.

Its function is as follows. Binds to the 23S rRNA. Forms part of the polypeptide exit tunnel. This is Large ribosomal subunit protein eL39 (rpl39e) from Haloarcula marismortui (strain ATCC 43049 / DSM 3752 / JCM 8966 / VKM B-1809) (Halobacterium marismortui).